The sequence spans 130 residues: Small ribosomal subunit protein uS9 (130 aa).

Belongs to the universal ribosomal protein uS9 family.

The sequence is that of Small ribosomal subunit protein uS9 from Herminiimonas arsenicoxydans.